We begin with the raw amino-acid sequence, 474 residues long: E3 ubiquitin-protein ligase CBL-C (474 aa).

The interval Pro-7–Cys-145 is 4H. The Cbl-PTB domain occupies Pro-7–Glu-321. Positions Gly-146–Phe-218 are EF-hand-like. Ca(2+) contacts are provided by Asp-199, Thr-201, and Glu-210. Residues Gln-219–Glu-321 are SH2-like. Residue Arg-264 coordinates 4-O-phospho-L-tyrosine. The interval Leu-322–Leu-350 is linker. Tyr-341 carries the phosphotyrosine; by SRC modification. The RING-type zinc finger occupies Cys-351–Arg-390. Residues Cys-351–Ala-474 are interaction with RET. The tract at residues Thr-409–Ala-474 is disordered. Positions Ser-432–Asp-441 are enriched in pro residues.

Interacts with ubiquitin-conjugating enzyme E2 UBE2D2 and UBE2D3. Isoform 1 interacts with EGFR (tyrosine phosphorylated). Interacts with the SH3 domain proteins LYN and CRK. Interacts (via RING-type zinc finger) with TGFB1I1 (via LIM zinc-binding domain 2); the interaction is direct and enhances the E3 activity. Interacts directly with RET (inactive) and CD2AP; dissociates from RET upon RET activation by GDNF which also increases the interaction with CD2AP suggesting dissociation as CBLC:CD2AP complex. Interacts with SRC; the interaction is enhanced when SRC is phosphorylated at 'Tyr-419'. Phosphorylated on multiple tyrosine residues by SRC. Isoform 1, but not isoform 2, is phosphorylated on tyrosines by EGFR. In terms of processing, autoubiquitinated when phosphorylated at Tyr-341, enhanced by SRC; suggesting proteasomal degradation. Ubiquitous.

It carries out the reaction S-ubiquitinyl-[E2 ubiquitin-conjugating enzyme]-L-cysteine + [acceptor protein]-L-lysine = [E2 ubiquitin-conjugating enzyme]-L-cysteine + N(6)-ubiquitinyl-[acceptor protein]-L-lysine.. Phosphorylation at Tyr-341 is necessary and sufficient for the activation of E3 activity. Functionally, acts as an E3 ubiquitin-protein ligase, which accepts ubiquitin from specific E2 ubiquitin-conjugating enzymes, and then transfers it to substrates promoting their degradation by the proteasome. Functionally coupled with the E2 ubiquitin-protein ligases UB2D1, UB2D2 and UB2D3. Regulator of EGFR mediated signal transduction; upon EGF activation, ubiquitinates EGFR. Isoform 1, but not isoform 2, inhibits EGF stimulated MAPK1 activation. Promotes ubiquitination of SRC phosphorylated at 'Tyr-419'. In collaboration with CD2AP may act as regulatory checkpoint for Ret signaling by modulating the rate of RET degradation after ligand activation; CD2AP converts it from an inhibitor to a promoter of RET degradation; the function limits the potency of GDNF on neuronal survival. The protein is E3 ubiquitin-protein ligase CBL-C (CBLC) of Homo sapiens (Human).